The primary structure comprises 284 residues: 2-dehydro-3-deoxyphosphooctonate aldolase (284 aa).

Belongs to the KdsA family.

It is found in the cytoplasm. The enzyme catalyses D-arabinose 5-phosphate + phosphoenolpyruvate + H2O = 3-deoxy-alpha-D-manno-2-octulosonate-8-phosphate + phosphate. It participates in carbohydrate biosynthesis; 3-deoxy-D-manno-octulosonate biosynthesis; 3-deoxy-D-manno-octulosonate from D-ribulose 5-phosphate: step 2/3. Its pathway is bacterial outer membrane biogenesis; lipopolysaccharide biosynthesis. The sequence is that of 2-dehydro-3-deoxyphosphooctonate aldolase from Burkholderia cenocepacia (strain HI2424).